We begin with the raw amino-acid sequence, 216 residues long: uncharacterized protein (216 aa).

This is an uncharacterized protein from Acanthamoeba polyphaga mimivirus (APMV).